A 367-amino-acid chain; its full sequence is Probable butyrate kinase (367 aa).

It belongs to the acetokinase family.

The protein resides in the cytoplasm. The catalysed reaction is butanoate + ATP = butanoyl phosphate + ADP. In Bacillus cereus (strain ATCC 14579 / DSM 31 / CCUG 7414 / JCM 2152 / NBRC 15305 / NCIMB 9373 / NCTC 2599 / NRRL B-3711), this protein is Probable butyrate kinase.